The following is a 204-amino-acid chain: TPR repeat-containing protein RHE_CH03534.1 (204 aa).

Positions 1–29 (MSAMRLFALTSAMLPLAFILSTSPFPATA) are cleaved as a signal peptide. 3 TPR repeats span residues 84–117 (INLL…KPDY), 118–151 (AESW…EPRH), and 153–185 (GALS…YPAD).

This chain is TPR repeat-containing protein RHE_CH03534.1, found in Rhizobium etli (strain ATCC 51251 / DSM 11541 / JCM 21823 / NBRC 15573 / CFN 42).